The chain runs to 355 residues: Peptide chain release factor 1 (355 aa).

Q233 carries the post-translational modification N5-methylglutamine.

The protein belongs to the prokaryotic/mitochondrial release factor family. In terms of processing, methylated by PrmC. Methylation increases the termination efficiency of RF1.

The protein resides in the cytoplasm. Its function is as follows. Peptide chain release factor 1 directs the termination of translation in response to the peptide chain termination codons UAG and UAA. The polypeptide is Peptide chain release factor 1 (Bacillus anthracis).